The chain runs to 155 residues: Transcriptional repressor NrdR (155 aa).

The segment at 3–34 (CPFCGNIDTQVKDSRPAEDHVSIRRRRFCPAC) is a zinc-finger region. The ATP-cone domain maps to 49-139 (LVVIKSSGKR…VYKNFQAADD (91 aa)).

This sequence belongs to the NrdR family. Zn(2+) serves as cofactor.

Its function is as follows. Negatively regulates transcription of bacterial ribonucleotide reductase nrd genes and operons by binding to NrdR-boxes. The protein is Transcriptional repressor NrdR of Cereibacter sphaeroides (strain ATCC 17025 / ATH 2.4.3) (Rhodobacter sphaeroides).